Reading from the N-terminus, the 432-residue chain is Casein kinase II subunit alpha-4, chloroplastic (432 aa).

Residues M1–S55 constitute a chloroplast transit peptide. Residues L63–E83 are disordered. Over residues Q66–Q75 the composition is skewed to low complexity. The Protein kinase domain maps to Y132–F417. ATP is bound by residues V138–V146 and K161. Catalysis depends on D249, which acts as the Proton acceptor.

This sequence belongs to the protein kinase superfamily. Ser/Thr protein kinase family. CK2 subfamily. As to quaternary structure, tetramer of two alpha and two beta chains. As to expression, expressed in root tips, lateral root primordia, cotyledons, leaf primordia, sepals, filaments, stigma, and anthers.

Its subcellular location is the plastid. It is found in the chloroplast. The enzyme catalyses L-seryl-[protein] + ATP = O-phospho-L-seryl-[protein] + ADP + H(+). It catalyses the reaction L-threonyl-[protein] + ATP = O-phospho-L-threonyl-[protein] + ADP + H(+). In terms of biological role, casein kinases are operationally defined by their preferential utilization of acidic proteins such as caseins as substrates. The alpha chain contains the catalytic site. Involved in the regulation of various developmental processes. Involved in the regulation of plant growth and flowering time. Involved in retrograde signaling in plant responses to abscisic acid (ABA) and heat stress. May act as an enhancing factor in abiotic stress signaling through modulation of the expression of some molecular players in retrograde signaling. Phosphorylates RuBisCo activase (RCA) at Thr-78. The protein is Casein kinase II subunit alpha-4, chloroplastic of Arabidopsis thaliana (Mouse-ear cress).